The chain runs to 475 residues: MTAPLPPIAAIATAPGRGGIGVVRVSGPDVRPVMHAICGQALKPRHATYLPFLDGHGKVIDHGLALYFPGPNSYTGEEVLELQGHGGPVVMQMLLTRCLQAGHGIGLRLAEPGEFTRRAFLNDKLDLAQAEAVADLIEASTEAAARSAARSMEGEFSHAIHTLVEKVIHLRMLVEATLDFPEEEIDFLEASDARGQLATIRNDLGNVLAQARQGALLREGLSVVLAGQPNVGKSSLLNALAGAELAIVTPIAGTTRDRVKETIQIEGIPLHIIDTAGLRDEATDEVERIGIERTWDAIRRADIVLHLVDATDYLRHGLSEIDDAIDDRLSGQLPPGAPIVRVVNKIDVAPTVGGMMFSGNRPHVVAANGPNPTEIWISARTGSGIELLRKELLRLVGWQSGNEGTFLARERHLTALRQAQSHLDVAAEQSERQAQALDLFAEELRLAQEHLNSITGEFTSDDLLGTIFTRFCIGK.

(6S)-5-formyl-5,6,7,8-tetrahydrofolate contacts are provided by Arg-24, Glu-81, and Lys-124. One can recognise a TrmE-type G domain in the interval 220 to 397; sequence GLSVVLAGQP…LRKELLRLVG (178 aa). Asn-230 is a K(+) binding site. GTP is bound by residues 230–235, 249–255, 274–277, and 378–380; these read NVGKSS, TPIAGTT, DTAG, and SAR. Residue Ser-234 coordinates Mg(2+). K(+) is bound by residues Thr-249, Ile-251, and Thr-254. Mg(2+) is bound at residue Thr-255. Position 475 (Lys-475) interacts with (6S)-5-formyl-5,6,7,8-tetrahydrofolate.

This sequence belongs to the TRAFAC class TrmE-Era-EngA-EngB-Septin-like GTPase superfamily. TrmE GTPase family. Homodimer. Heterotetramer of two MnmE and two MnmG subunits. K(+) is required as a cofactor.

Its subcellular location is the cytoplasm. Functionally, exhibits a very high intrinsic GTPase hydrolysis rate. Involved in the addition of a carboxymethylaminomethyl (cmnm) group at the wobble position (U34) of certain tRNAs, forming tRNA-cmnm(5)s(2)U34. The protein is tRNA modification GTPase MnmE of Cupriavidus pinatubonensis (strain JMP 134 / LMG 1197) (Cupriavidus necator (strain JMP 134)).